The sequence spans 905 residues: Alanine--tRNA ligase (905 aa).

The Zn(2+) site is built by H569, H573, C693, and H697.

It belongs to the class-II aminoacyl-tRNA synthetase family. The cofactor is Zn(2+).

The protein localises to the cytoplasm. It catalyses the reaction tRNA(Ala) + L-alanine + ATP = L-alanyl-tRNA(Ala) + AMP + diphosphate. Catalyzes the attachment of alanine to tRNA(Ala) in a two-step reaction: alanine is first activated by ATP to form Ala-AMP and then transferred to the acceptor end of tRNA(Ala). Also edits incorrectly charged Ser-tRNA(Ala) and Gly-tRNA(Ala) via its editing domain. In Roseiflexus castenholzii (strain DSM 13941 / HLO8), this protein is Alanine--tRNA ligase.